The following is a 565-amino-acid chain: MRQSLTFIPTLREVPADAEAKSHQLLVRAGFIRQNTSGIYHYLPLAHKVIQHIQSIVRKEMEKAGAAELLMPVLQQAEMWQESGRWYTYGPELMRMKDRHGREFALGPTHEEVITSLVRSEVKSYKKLPLTLYQIQSKFRDEQRPRFGLLRGREFIMKDAYSFHSSPESLDDTYNKMFTAYSNVFSKVGLNFRPVIADSGAMGGKDTHEFMALSEVGEDTIAYSDTSSYAANIEMAEAVYQGEEANPADFKELEKVHTPQVKTIQDIAGFLDVDPSLCIKSVLFKADDAYVLILTRGDHEVNDVKVKNLVGAQLVELATREEVLEVIGTEPGFVGPVKLEAEVDIYADLTVKGMTNAVAGANEADYHYVNVNPARDVSVKEFTDLRFIQEGDVSPDGEGTIQFAKGIEVGQVFKLGTRYSESMDATYLDENGRAQPMIMGCYGIGISRTLSAIVEQHHDEKGIIWPEAVAPYDLHLLALNMKNDAQKELAETLYERLENEGFDVLFDDRQERAGVKFADSDLIGLPIRISCGKRSEEGIVEVKFRKSGESHEVSVDELISFIRQA.

This sequence belongs to the class-II aminoacyl-tRNA synthetase family. ProS type 1 subfamily. In terms of assembly, homodimer.

It is found in the cytoplasm. The catalysed reaction is tRNA(Pro) + L-proline + ATP = L-prolyl-tRNA(Pro) + AMP + diphosphate. Catalyzes the attachment of proline to tRNA(Pro) in a two-step reaction: proline is first activated by ATP to form Pro-AMP and then transferred to the acceptor end of tRNA(Pro). As ProRS can inadvertently accommodate and process non-cognate amino acids such as alanine and cysteine, to avoid such errors it has two additional distinct editing activities against alanine. One activity is designated as 'pretransfer' editing and involves the tRNA(Pro)-independent hydrolysis of activated Ala-AMP. The other activity is designated 'posttransfer' editing and involves deacylation of mischarged Ala-tRNA(Pro). The misacylated Cys-tRNA(Pro) is not edited by ProRS. The protein is Proline--tRNA ligase of Bacillus pumilus (strain SAFR-032).